The sequence spans 306 residues: Armadillo repeat-containing protein 10 (306 aa).

Residues 7-29 traverse the membrane as a helical segment; it reads VGWVAAGLVLGAGACYCIYRLTR. The residue at position 43 (S43) is a Phosphoserine. Position 48 is a phosphothreonine (T48). An ARM repeat occupies 101–143; the sequence is GGIPIVGSKINSLNQSIKEKALNALNNLSVNVENQTKIKIYVR.

In terms of assembly, interacts with the DNA-binding domain of p53/TP53.

The protein localises to the endoplasmic reticulum membrane. The protein resides in the mitochondrion outer membrane. May play a role in cell survival and cell growth. May suppress the transcriptional activity of p53/TP53. This is Armadillo repeat-containing protein 10 (Armc10) from Rattus norvegicus (Rat).